We begin with the raw amino-acid sequence, 228 residues long: Deoxyribose-phosphate aldolase (228 aa).

The active-site Proton donor/acceptor is aspartate 96. Lysine 157 functions as the Schiff-base intermediate with acetaldehyde in the catalytic mechanism. Lysine 185 acts as the Proton donor/acceptor in catalysis.

This sequence belongs to the DeoC/FbaB aldolase family. DeoC type 1 subfamily.

Its subcellular location is the cytoplasm. The catalysed reaction is 2-deoxy-D-ribose 5-phosphate = D-glyceraldehyde 3-phosphate + acetaldehyde. The protein operates within carbohydrate degradation; 2-deoxy-D-ribose 1-phosphate degradation; D-glyceraldehyde 3-phosphate and acetaldehyde from 2-deoxy-alpha-D-ribose 1-phosphate: step 2/2. Catalyzes a reversible aldol reaction between acetaldehyde and D-glyceraldehyde 3-phosphate to generate 2-deoxy-D-ribose 5-phosphate. This Cyanothece sp. (strain PCC 7425 / ATCC 29141) protein is Deoxyribose-phosphate aldolase.